A 77-amino-acid chain; its full sequence is Bradykinin-potentiating peptide (77 aa).

Residues 1–22 form the signal peptide; sequence MNKKTLLVIFIVTLLIADEVNS. Residues 74–77 constitute a propeptide that is removed on maturation; it reads RRRR.

The protein belongs to the non-disulfide-bridged peptide (NDBP) superfamily. Long chain multifunctional peptide (group 2) family. In terms of tissue distribution, expressed by the venom gland.

Its subcellular location is the secreted. Antimicrobial peptide. May also inhibit angiotensin-converting enzyme (ACE) and potentiate bradykinin (BK). The chain is Bradykinin-potentiating peptide from Tityus discrepans (Venezuelan scorpion).